Consider the following 98-residue polypeptide: Defensin-like protein 192 (98 aa).

A signal peptide spans Met1–Ala27. Disulfide bonds link Cys32/Cys86, Cys45/Cys69, Cys54/Cys81, and Cys58/Cys83.

It belongs to the DEFL family. Protease inhibitor I18 (RTI/MTI-2) subfamily.

It localises to the secreted. This Arabidopsis thaliana (Mouse-ear cress) protein is Defensin-like protein 192 (ATTI7).